The sequence spans 1091 residues: Ubiquitin carboxyl-terminal hydrolase 36 (1091 aa).

Residues 115 to 152 form a disordered region; it reads ANGHDNNGRKLSDHPNQNHNHANPNGHHANPNELPKPK. Over residues 128-146 the composition is skewed to low complexity; the sequence is HPNQNHNHANPNGHHANPN. The 309-residue stretch at 176–484 folds into the USP domain; the sequence is SGMINAGNTC…NAYIMFYELD (309 aa). The active-site Nucleophile is the C185. H443 functions as the Proton acceptor in the catalytic mechanism. Residues S518 and S522 each carry the phosphoserine modification. Disordered regions lie at residues 523–572, 594–892, 972–1007, and 1068–1091; these read PAKF…KSPL, PTAN…ELLK, QRDLADDEENEMDRGRQRKVKSGSAKISNSTPGYNP, and LAAGGGFTRRQPTHSAQQQQQQQS. Residues 547–572 show a composition bias toward polar residues; that stretch reads TTIQFKPQHQPSHQQNGVQQSAKSPL. The segment covering 594–612 has biased composition (low complexity); that stretch reads PTANGNKSSSNHSNHKSVN. Positions 643 to 652 are enriched in basic and acidic residues; sequence KMDDCMDSGK. The segment covering 653 to 667 has biased composition (low complexity); that stretch reads PKSPVKTPVKTPLKS. A phosphothreonine mark is found at T659 and T663. Phosphoserine occurs at positions 673 and 675. Positions 691 to 702 are enriched in basic and acidic residues; it reads RSSDSSDSEHEP. The span at 703-727 shows a compositional bias: polar residues; that stretch reads TTSSVQLNGHSKTNGSLSNGSSKST. Position 749 is a phosphoserine (S749). Residues 749–759 show a composition bias toward acidic residues; it reads SEDDDDDEDEP. The span at 769–780 shows a compositional bias: low complexity; that stretch reads PQKQSQSQSRSG. The segment covering 781-790 has biased composition (pro residues); it reads PPSPKTPPSP. S783 is modified (phosphoserine). Residue T786 is modified to Phosphothreonine. At S789 the chain carries Phosphoserine. The segment covering 806-821 has biased composition (acidic residues); that stretch reads DGDDDEDDDDDDDEVV. T829 carries the post-translational modification Phosphothreonine. Composition is skewed to polar residues over residues 838–850 and 863–886; these read FASSKTATDSPTT and AIKTQQQPRAGNGYQSEATANGGT. S847 carries the phosphoserine modification. A Phosphothreonine modification is found at T850.

Belongs to the peptidase C19 family. Interacts with atms/PAF1, but not with CycT.

It localises to the nucleus. The protein localises to the nucleolus. It catalyses the reaction Thiol-dependent hydrolysis of ester, thioester, amide, peptide and isopeptide bonds formed by the C-terminal Gly of ubiquitin (a 76-residue protein attached to proteins as an intracellular targeting signal).. Its function is as follows. Required for maintaining multiple types of adult stem cells, including male and female germline, epithelial follicle cell and intestinal stem cells. May function as a transcriptional repressor by continually deubiquiting histone H2B at the promoters of genes critical for cellular differentiation, thereby preventing histone H3 'Lys-4' trimethylation (H3K4). Controls selective autophagy activation by ubiquitinated proteins. The protein is Ubiquitin carboxyl-terminal hydrolase 36 (Usp36) of Drosophila ananassae (Fruit fly).